Here is a 385-residue protein sequence, read N- to C-terminus: Pre-mRNA-splicing factor slt-11 (385 aa).

The disordered stretch occupies residues 157 to 233 (RKGREVDEEG…PPGPKDWLPP (77 aa)). A compositionally biased stretch (low complexity) spans 171–187 (GSSSGAGRATGGNPAVG). Residues 239 to 312 (MSLFVTGIED…CPLRVRWSVP (74 aa)) enclose the RRM domain. The span at 320–331 (KEQRSEMLRDGR) shows a compositional bias: basic and acidic residues. Residues 320–370 (KEQRSEMLRDGRSAFGSGQKTGGQKAIGGQNAQGGASGAQKDDASNLTIAA) are disordered.

The protein belongs to the SLT11 family. In terms of assembly, associated with the spliceosome.

It localises to the nucleus. Its function is as follows. Involved in pre-mRNA splicing. Facilitates the cooperative formation of U2/U6 helix II in association with stem II in the spliceosome. Binds to RNA. The polypeptide is Pre-mRNA-splicing factor slt-11 (slt-11) (Neurospora crassa (strain ATCC 24698 / 74-OR23-1A / CBS 708.71 / DSM 1257 / FGSC 987)).